The following is a 77-amino-acid chain: Acyl carrier protein (77 aa).

The 75-residue stretch at 1–75 (MVFEKVKDII…DVVNYIKAHT (75 aa)) folds into the Carrier domain. An O-(pantetheine 4'-phosphoryl)serine modification is found at S35.

Belongs to the acyl carrier protein (ACP) family. Post-translationally, 4'-phosphopantetheine is transferred from CoA to a specific serine of apo-ACP by AcpS. This modification is essential for activity because fatty acids are bound in thioester linkage to the sulfhydryl of the prosthetic group.

It localises to the cytoplasm. Its pathway is lipid metabolism; fatty acid biosynthesis. Carrier of the growing fatty acid chain in fatty acid biosynthesis. This Clostridium acetobutylicum (strain ATCC 824 / DSM 792 / JCM 1419 / IAM 19013 / LMG 5710 / NBRC 13948 / NRRL B-527 / VKM B-1787 / 2291 / W) protein is Acyl carrier protein.